The following is a 158-amino-acid chain: uncharacterized protein (158 aa).

Residues 1-26 are disordered; the sequence is MRASRSPPSPRRCHHHHEATGAASGA.

This is an uncharacterized protein from Homo sapiens (Human).